The chain runs to 110 residues: UPF0122 protein SH1678 (110 aa).

It belongs to the UPF0122 family.

Functionally, might take part in the signal recognition particle (SRP) pathway. This is inferred from the conservation of its genetic proximity to ftsY/ffh. May be a regulatory protein. This Staphylococcus haemolyticus (strain JCSC1435) protein is UPF0122 protein SH1678.